Here is a 413-residue protein sequence, read N- to C-terminus: Paxillin homolog 1 (413 aa).

Positions 33 to 45 (HISDRRSQSRDDF) are enriched in basic and acidic residues. Residues 33–157 (HISDRRSQSR…PLHSDSMIGT (125 aa)) are disordered. Residues 49–69 (YDLQGNLNTQSVSNGNITTSP) are compositionally biased toward polar residues. The span at 73–92 (RSSEGKDYSKSQERIYENES) shows a compositional bias: basic and acidic residues. A compositionally biased stretch (polar residues) spans 118–143 (ASSSRKSLGPPSQAQSYSDVRSNGRS). 4 consecutive LIM zinc-binding domains span residues 174-232 (GDCA…NQFS), 233-292 (PKCQ…LFAP), 293-350 (KCNG…ESRG), and 351-410 (SICS…TYAL).

Belongs to the paxillin family. As to expression, isoform a: Expressed in all 95 body wall muscle cells as well as in the pharyngeal muscle cells (at protein level). Isoform c: Expressed in the body wall muscle cells and in the pharyngeal muscle cells.

It is found in the cell junction. Its subcellular location is the adherens junction. The protein resides in the cell membrane. It localises to the cytoplasm. The protein localises to the myofibril. It is found in the sarcomere. Its subcellular location is the m line. The protein resides in the cell projection. It localises to the podosome. Required for myofilament organization of the pharyngeal sarcomeres and for pharyngeal muscle contractions and hence for pharyngeal pumping. Together with lin-8, might be required for myofilament organization in the body wall muscles. This is Paxillin homolog 1 (pxl-1) from Caenorhabditis elegans.